We begin with the raw amino-acid sequence, 294 residues long: Small ribosomal subunit protein uS2 (294 aa).

This sequence belongs to the universal ribosomal protein uS2 family.

In Mycoplasma pneumoniae (strain ATCC 29342 / M129 / Subtype 1) (Mycoplasmoides pneumoniae), this protein is Small ribosomal subunit protein uS2 (rpsB).